A 331-amino-acid polypeptide reads, in one-letter code: 6-phosphogluconolactonase (331 aa).

Lys-287 carries the post-translational modification N6-acetyllysine.

The protein belongs to the cycloisomerase 2 family.

It catalyses the reaction 6-phospho-D-glucono-1,5-lactone + H2O = 6-phospho-D-gluconate + H(+). It participates in carbohydrate degradation; pentose phosphate pathway; D-ribulose 5-phosphate from D-glucose 6-phosphate (oxidative stage): step 2/3. In terms of biological role, catalyzes the hydrolysis of 6-phosphogluconolactone to 6-phosphogluconate. This chain is 6-phosphogluconolactonase, found in Escherichia coli O127:H6 (strain E2348/69 / EPEC).